We begin with the raw amino-acid sequence, 73 residues long: Homeodomain-only protein (73 aa).

The homeobox; degenerate DNA-binding region spans 3-62 (AEPANGPTEDQVEILEYNFNKVNRHPDPTTLCLIAAEAGLSEEETQKWFKQRLAQWRRSE).

Interacts with serum response factor (SRF). Component of a large complex containing histone deacetylases such as HDAC2. Interacts with the acetylated forms of HSPA1A and HSPA1B. Interacts with HSPA8.

The protein resides in the nucleus. The protein localises to the cytoplasm. Atypical homeodomain protein which does not bind DNA and is required to modulate cardiac growth and development. Acts via its interaction with SRF, thereby modulating the expression of SRF-dependent cardiac-specific genes and cardiac development. Prevents SRF-dependent transcription either by inhibiting SRF binding to DNA or by recruiting histone deacetylase (HDAC) proteins that prevent transcription by SRF. Overexpression causes cardiac hypertrophy. Acts as a co-chaperone for HSPA1A and HSPA1B chaperone proteins and assists in chaperone-mediated protein refolding. The sequence is that of Homeodomain-only protein (HOPX) from Sus scrofa (Pig).